A 300-amino-acid polypeptide reads, in one-letter code: Tyrosine recombinase XerC (300 aa).

The Core-binding (CB) domain occupies 2-88 (TQEGKLEQQF…SLRSFYTFLL (87 aa)). Positions 109–294 (RLPKFFYSEE…TKEHLKSTYM (186 aa)) constitute a Tyr recombinase domain. Active-site residues include Arg-150, Lys-174, His-246, Arg-249, and His-272. Tyr-281 (O-(3'-phospho-DNA)-tyrosine intermediate) is an active-site residue.

This sequence belongs to the 'phage' integrase family. XerC subfamily. As to quaternary structure, forms a cyclic heterotetrameric complex composed of two molecules of XerC and two molecules of XerD.

Its subcellular location is the cytoplasm. In terms of biological role, site-specific tyrosine recombinase, which acts by catalyzing the cutting and rejoining of the recombining DNA molecules. The XerC-XerD complex is essential to convert dimers of the bacterial chromosome into monomers to permit their segregation at cell division. It also contributes to the segregational stability of plasmids. This Listeria welshimeri serovar 6b (strain ATCC 35897 / DSM 20650 / CCUG 15529 / CIP 8149 / NCTC 11857 / SLCC 5334 / V8) protein is Tyrosine recombinase XerC.